The chain runs to 361 residues: 3-galactosyl-N-acetylglucosaminide 4-alpha-L-fucosyltransferase FUT3 (361 aa).

Topologically, residues 1–15 (MDPLGAAKPQWPWRR) are cytoplasmic. Residues 16–34 (CLAALLFQLLVAVCFFSYL) traverse the membrane as a helical; Signal-anchor for type II membrane protein segment. Over 35–361 (RVSRDDATGS…TVRSIAAWFT (327 aa)) the chain is Lumenal. The segment at 39–58 (DDATGSPRAPSGSSRQDTTP) is disordered. N-linked (GlcNAc...) asparagine glycosylation is found at Asn154 and Asn185.

The protein belongs to the glycosyltransferase 10 family. Glycosylated. Highly expressed in stomach, colon, small intestine, lung and kidney and to a lesser extent in salivary gland, bladder, uterus and liver.

It is found in the golgi apparatus. It localises to the golgi stack membrane. It catalyses the reaction a beta-D-galactosyl-(1-&gt;3)-N-acetyl-beta-D-glucosaminyl derivative + GDP-beta-L-fucose = a beta-D-galactosyl-(1-&gt;3)-[alpha-L-fucosyl-(1-&gt;4)]-N-acetyl-beta-D-glucosaminyl derivative + GDP + H(+). It carries out the reaction an N-acetyl-alpha-neuraminyl-(2-&gt;3)-beta-D-galactosyl-(1-&gt;4)-N-acetyl-beta-D-glucosaminyl derivative + GDP-beta-L-fucose = an alpha-Neu5Ac-(2-&gt;3)-beta-D-Gal-(1-&gt;4)-[alpha-L-Fuc-(1-&gt;3)]-beta-D-GlcNAc derivative + GDP + H(+). The catalysed reaction is a beta-D-galactosyl-(1-&gt;4)-N-acetyl-beta-D-glucosaminyl derivative + GDP-beta-L-fucose = a beta-D-galactosyl-(1-&gt;4)-[alpha-L-fucosyl-(1-&gt;3)]-N-acetyl-beta-D-glucosaminyl derivative + GDP + H(+). The enzyme catalyses an alpha-Neu5Ac-(2-&gt;3)-beta-D-Gal-(1-&gt;4)-beta-D-GlcNAc-(1-&gt;3)-beta-D-Gal-(1-&gt;4)-[alpha-L-Fuc-(1-&gt;3)]-beta-D-GlcNAc derivative + GDP-beta-L-fucose = an alpha-Neu5Ac-(2-&gt;3)-beta-D-Gal-(1-&gt;4)-[alpha-L-Fuc-(1-&gt;3)]-beta-D-GlcNAc-(1-&gt;3)-beta-D-Gal-(1-&gt;4)-[alpha-L-Fuc-(1-&gt;3)]-beta-D-GlcNAc derivative + GDP + H(+). It catalyses the reaction Lc4Cer + GDP-beta-L-fucose = a lactoside III(4)-a-Fuc-Lc4Cer + GDP + H(+). It carries out the reaction a beta-D-Gal-(1-&gt;3)-beta-D-GlcNAc-(1-&gt;3)-beta-D-Gal-(1-&gt;4)-beta-D-Glc-(1&lt;-&gt;1')-Cer(d18:1(4E)) + GDP-beta-L-fucose = a III(4)-a-Fuc-Lc4Cer(d18:1(4E)) + GDP + H(+). The catalysed reaction is N-acetyl-alpha-neuraminosyl-(2-&gt;3)-beta-D-galactosyl-(1-&gt;3)-[N-acetyl-alpha-neuraminosyl-(2-&gt;6)]-N-acetyl-beta-D-glucosaminyl-(1-&gt;3)-beta-D-galactosyl-(1-&gt;4)-beta-D-glucosyl-(1&lt;-&gt;1')-N-acyl-sphing-4-enine + GDP-beta-L-fucose = N-acetyl-alpha-neuraminosyl-(2-&gt;3)-beta-D-galactosyl-(1-&gt;3)-alpha-L-fucosyl-(1-&gt;4)-[N-acetyl-alpha-neuraminosyl-(2-&gt;6)-N-acetyl-beta-D-glucosaminyl-(1-&gt;3)]-beta-D-galactosyl-(1-&gt;4)-beta-D-glucosyl-(1&lt;-&gt;1')-N-acyl-sphing-4-enine + GDP + H(+). The enzyme catalyses N-acetyl-alpha-neuraminosyl-(2-&gt;3)-beta-D-galactosyl-(1-&gt;3)-N-acetyl-beta-D-glucosaminyl-(1-&gt;3)-beta-D-galactosyl-(1-&gt;4)-beta-D-glucosyl-(1&lt;-&gt;1')-N-acyl-sphing-4-enine + GDP-beta-L-fucose = N-acetyl-alpha-neuraminosyl-(2-&gt;3)-beta-D-galactosyl-(1-&gt;3)-alpha-L-fucosyl-(1-&gt;4)-[N-acetyl-beta-D-glucosaminyl-(1-&gt;3)]-beta-D-galactosyl-(1-&gt;4)-beta-D-glucosyl-(1&lt;-&gt;1')-N-acyl-sphing-4-enine + GDP + H(+). It catalyses the reaction beta-D-galactosyl-(1-&gt;3)-N-acetyl-D-glucosamine + GDP-beta-L-fucose = beta-D-galactosyl-(1-&gt;3)-[alpha-L-fucosyl-(1-&gt;4)]-N-acetyl-D-glucosamine + GDP + H(+). It carries out the reaction alpha-L-Fuc-(1-&gt;2)-beta-D-Gal-(1-&gt;3)-D-GlcNAc + GDP-beta-L-fucose = alpha-L-Fuc-(1-&gt;2)-beta-D-Gal-(1-&gt;3)-[alpha-L-Fuc-(1-&gt;4)]-D-GlcNAc + GDP + H(+). The catalysed reaction is alpha-L-Fuc-(1-&gt;2)-beta-D-Gal-(1-&gt;4)-D-GlcNAc + GDP-beta-L-fucose = alpha-L-Fuc-(1-&gt;2)-beta-D-Gal-(1-&gt;4)-[alpha-L-Fuc-(1-&gt;3)]-D-GlcNAc + GDP + H(+). The enzyme catalyses beta-D-galactosyl-(1-&gt;4)-N-acetyl-D-glucosamine + GDP-beta-L-fucose = beta-D-galactosyl-(1-&gt;4)-[alpha-L-fucosyl-(1-&gt;3)]-N-acetyl-D-glucosamine + GDP + H(+). It catalyses the reaction lactose + GDP-beta-L-fucose = beta-D-galactosyl-(1-&gt;4)-[alpha-L-fucosyl-(1-&gt;3)]-D-glucose + GDP + H(+). It carries out the reaction an alpha-Neu5Ac-(2-&gt;3)-beta-D-Gal-(1-&gt;3)-D-GlcNAc derivative + GDP-beta-L-fucose = an alpha-Neu5Ac-(2-&gt;3)-beta-D-Gal-(1-&gt;3)-[alpha-L-Fuc-(1-&gt;4)]-beta-D-GlcNAc derivative + GDP + H(+). Its pathway is protein modification; protein glycosylation. Catalyzes the transfer of L-fucose, from a guanosine diphosphate-beta-L-fucose, to both the subterminal N-acetyl glucosamine (GlcNAc) of type 1 chain (beta-D-Gal-(1-&gt;3)-beta-D-GlcNAc) glycolipids and oligosaccharides via an alpha(1,4) linkage, and the subterminal glucose (Glc) or GlcNAc of type 2 chain (beta-D-Gal-(1-&gt;4)-beta-D-GlcNAc) oligosaccharides via an alpha(1,3) linkage, independently of the presence of terminal alpha-L-fucosyl-(1,2) moieties on the terminal galactose of these acceptors. Through its catalytic activity, participates in the synthesis of antigens of the Lewis blood group system, i.e. Lewis a (Le(a)), lewis b (Le(b)), Lewis x/SSEA-1 (Le(x)) and lewis y (Le(y)) antigens. Also catalyzes the transfer of L-fucose to subterminal GlcNAc of sialyl- and disialyl-lactotetraosylceramide to produce sialyl Lewis a (sLe(a)) and disialyl Lewis a via an alpha(1,4) linkage and therefore may regulate cell surface sLe(a) expression and consequently regulates adhesive properties to E-selectin, cell proliferation and migration. Catalyzes the transfer of an L-fucose to 3'-sialyl-N-acetyllactosamine by an alpha(1,3) linkage, which allows the formation of sialyl-Lewis x structure and therefore may regulate the sialyl-Lewis x surface antigen expression and consequently adhesive properties to E-selectin. Prefers type 1 chain over type 2 acceptors. Type 1 tetrasaccharide is a better acceptor than type 1 disaccharide suggesting that a beta anomeric configuration of GlcNAc in the substrate is preferred. Lewis-positive (Le(+)) individuals have an active enzyme while Lewis-negative (Le(-)) individuals have an inactive enzyme. This Homo sapiens (Human) protein is 3-galactosyl-N-acetylglucosaminide 4-alpha-L-fucosyltransferase FUT3.